Consider the following 375-residue polypeptide: Geranylgeranyl transferase type-1 subunit beta (375 aa).

Residues 1-33 are disordered; that stretch reads MSETAVSIDSDRSKSEEEDEEEYSPPVQSSPSA. Serine 2 carries the N-acetylserine modification. 4 PFTB repeats span residues 157-199, 206-247, 265-306, and 313-354; these read SKSL…YMLD, KESA…RLMG, PSLL…KLIG, and KMAL…SLLE. Geranylgeranyl diphosphate contacts are provided by residues 232–234 and 285–288; these read HGG and RTNK. Zn(2+) is bound by residues aspartate 291 and cysteine 293. Residue 294–297 coordinates geranylgeranyl diphosphate; that stretch reads YAFW. Histidine 342 is a binding site for Zn(2+).

Belongs to the protein prenyltransferase subunit beta family. In terms of assembly, heterodimer of an alpha and a beta subunit. Requires Zn(2+) as cofactor. Mg(2+) serves as cofactor. Expressed in roots, leaves, stems, flowers and siliques.

It catalyses the reaction geranylgeranyl diphosphate + L-cysteinyl-[protein] = S-geranylgeranyl-L-cysteinyl-[protein] + diphosphate. In terms of biological role, catalyzes the transfer of a geranyl-geranyl moiety from geranyl-geranyl pyrophosphate to a cysteine at the fourth position from the C-terminus of proteins having the C-terminal sequence Cys-aliphatic-aliphatic-X (CaaX). Seems to exclusively prenylate CaaX substrates with leucine in the terminal position. The beta subunit is responsible for peptide-binding. May negatively regulate abscisic acid (ABA) signaling in guard cells and auxin-induced lateral root initiation. Functionally, negatively regulates ABA signaling in guard cells. in negative regulation of auxin-induced lateral root initiation. In Arabidopsis thaliana (Mouse-ear cress), this protein is Geranylgeranyl transferase type-1 subunit beta (GGB).